The following is a 299-amino-acid chain: tRNA dimethylallyltransferase (299 aa).

ATP is bound at residue Gly11 to Thr18. Thr13–Thr18 contacts substrate. The interval Asp36 to Gln39 is interaction with substrate tRNA.

The protein belongs to the IPP transferase family. Monomer. Requires Mg(2+) as cofactor.

The enzyme catalyses adenosine(37) in tRNA + dimethylallyl diphosphate = N(6)-dimethylallyladenosine(37) in tRNA + diphosphate. In terms of biological role, catalyzes the transfer of a dimethylallyl group onto the adenine at position 37 in tRNAs that read codons beginning with uridine, leading to the formation of N6-(dimethylallyl)adenosine (i(6)A). The protein is tRNA dimethylallyltransferase of Streptococcus pyogenes serotype M6 (strain ATCC BAA-946 / MGAS10394).